The chain runs to 168 residues: Acetone carboxylase gamma subunit (168 aa).

In terms of assembly, heterohexamer of two alpha, two beta and two gamma subunits. Fe cation is required as a cofactor. Requires Mg(2+) as cofactor. The cofactor is Zn(2+).

The enzyme catalyses acetone + hydrogencarbonate + 2 ATP + 3 H2O = acetoacetate + 2 AMP + 4 phosphate + 4 H(+). Its function is as follows. Catalyzes the carboxylation of acetone to form acetoacetate. Has a reduced activity on butanone, and no activity on 2-pentatone, 3-pentatone, 2-hexanone, chloroacetone, pyruvate, phosphoenolpyruvate, acetaldehyde, propionaldehyde and propylene oxide. The polypeptide is Acetone carboxylase gamma subunit (Xanthobacter autotrophicus (strain ATCC BAA-1158 / Py2)).